The following is a 342-amino-acid chain: Glucan endo-1,3-beta-glucosidase (342 aa).

A signal peptide spans 1-26 (MLASSPMLLFLLSLLMAYNFDTTAGQ). Glu-119 acts as the Proton donor in catalysis. Residue Glu-261 is the Nucleophile of the active site.

Belongs to the glycosyl hydrolase 17 family. In terms of processing, the N-terminus is blocked.

It is found in the vacuole. It carries out the reaction Hydrolysis of (1-&gt;3)-beta-D-glucosidic linkages in (1-&gt;3)-beta-D-glucans.. In terms of biological role, is thought to be an important plant defense-related product against fungal pathogens. Accumulation of the glucanase can be detected as early as 4 hours after inoculation. The sequence is that of Glucan endo-1,3-beta-glucosidase (BGL) from Brassica campestris (Field mustard).